We begin with the raw amino-acid sequence, 328 residues long: MKTQTKVMGGHVLLTVFTLCMLCSGVRAQLSPDIYAKSCPNLVQIVRKQVAIALKAEIRMAASLIRLHFHDCFVNGCDASLLLDGADSEKLAIPNINSARGFEVIDTIKAAVENACPGVVSCADILTLAARDSVVLSGGPGWRVALGRKDGLVANQNSANNLPSPFEPLDAIIAKFVAVNLNITDVVALSGAHTFGQAKCAVFSNRLFNFTGLGNPDATLETSLLSNLQTVCPLGGNSNITAPLDRSTTDTFDNNYFKNLLEGKGLLSSDQILFSSDLAVNTTKKLVEAYSRSQSLFFRDFTCAMIRMGNISNGASGEVRTNCRVINN.

The first 28 residues, 1 to 28, serve as a signal peptide directing secretion; that stretch reads MKTQTKVMGGHVLLTVFTLCMLCSGVRA. Gln-29 carries the pyrrolidone carboxylic acid modification. 4 disulfide bridges follow: Cys-39-Cys-116, Cys-72-Cys-77, Cys-122-Cys-323, and Cys-200-Cys-232. The Proton acceptor role is filled by His-70. The Ca(2+) site is built by Asp-71, Val-74, Gly-76, Asp-78, and Ser-80. Pro-163 lines the substrate pocket. Residue Asn-182 is glycosylated (N-linked (GlcNAc...) asparagine). A heme b-binding site is contributed by His-193. Thr-194 is a Ca(2+) binding site. 2 N-linked (GlcNAc...) asparagine glycosylation sites follow: Asn-209 and Asn-239. Ca(2+) is bound by residues Asp-245, Thr-248, Thr-251, and Asp-253. N-linked (GlcNAc...) asparagine glycans are attached at residues Asn-281 and Asn-310.

This sequence belongs to the peroxidase family. Classical plant (class III) peroxidase subfamily. The cofactor is heme b. Requires Ca(2+) as cofactor. Slightly expressed in roots.

The protein localises to the secreted. The enzyme catalyses 2 a phenolic donor + H2O2 = 2 a phenolic radical donor + 2 H2O. Functionally, removal of H(2)O(2), oxidation of toxic reductants, biosynthesis and degradation of lignin, suberization, auxin catabolism, response to environmental stresses such as wounding, pathogen attack and oxidative stress. These functions might be dependent on each isozyme/isoform in each plant tissue. This Arabidopsis thaliana (Mouse-ear cress) protein is Peroxidase 59 (PER59).